Consider the following 225-residue polypeptide: Nucleolar protein 6 (225 aa).

A disordered region spans residues methionine 1 to glycine 75. Positions leucine 9 to arginine 20 are enriched in basic residues. Residues lysine 21–arginine 42 are compositionally biased toward basic and acidic residues. The residue at position 45 (serine 45) is a Phosphoserine. Residues lysine 56 to glycine 75 show a composition bias toward basic residues. Positions phenylalanine 78–glycine 155 constitute an RRM domain. Residue serine 160 is modified to Phosphoserine. A disordered region spans residues asparagine 187–lysine 225.

The protein belongs to the RRM NOP6 family.

The protein localises to the nucleus. It is found in the nucleolus. Its function is as follows. Predicted to be involved in rRNA processing. This Saccharomyces cerevisiae (strain ATCC 204508 / S288c) (Baker's yeast) protein is Nucleolar protein 6 (NOP6).